We begin with the raw amino-acid sequence, 315 residues long: uncharacterized protein (315 aa).

Residues 1 to 38 (MDVLLSLPQPELFKTTVIPFLANRNIIKSEAILSNLHS) are Cytoplasmic-facing. Residues 39 to 59 (IFYVAIFYHIWFLFGKWILFP) traverse the membrane as a helical segment. At 60–101 (HLVKWKLDYDQKHNVKKDEKTTSERQAQHYKKKYTSLINQSS) the chain is on the lumenal side. The region spanning 95-302 (SLINQSSVHL…MVSVAAKVLK (208 aa)) is the TLC domain. A helical transmembrane segment spans residues 102–122 (VHLISLLQSIVVLYYSLKFLL). At 123-144 (DPKASAEPYQTSHSRVFTENRD) the chain is on the cytoplasmic side. A helical membrane pass occupies residues 145-165 (TQVICIFAIGYFVWDIYISTM). Residues 166 to 170 (YSTFP) lie on the Lumenal side of the membrane. A helical membrane pass occupies residues 171 to 190 (FVVHGIISTVVFCIGLKPYI). Over 191-225 (QYYAPVFLMFELSNPSLNFRWFGIKFLPQKSKFCS) the chain is Cytoplasmic. Residues 226–246 (LLLLLNNLTLMVVFFAARIAW) form a helical membrane-spanning segment. The Lumenal portion of the chain corresponds to 247–264 (GWFQIGKLCYDFYQVRNE). The chain crosses the membrane as a helical span at residues 265-285 (PGFLVFDTIVILAGNFVLDIL). Residues 286–315 (NVIWFSTMVSVAAKVLKKGESVDKVTKNEQ) lie on the Cytoplasmic side of the membrane.

The protein resides in the endoplasmic reticulum membrane. This is an uncharacterized protein from Saccharomyces cerevisiae (strain ATCC 204508 / S288c) (Baker's yeast).